We begin with the raw amino-acid sequence, 151 residues long: uncharacterized protein (151 aa).

Residues 3–151 (IKIDDLTGRQ…PNSVFMTKKL (149 aa)) form the N-acetyltransferase domain.

Belongs to the acetyltransferase family.

This is an uncharacterized protein from Bacillus subtilis (strain 168).